We begin with the raw amino-acid sequence, 298 residues long: Heterogeneous nuclear ribonucleoprotein C (298 aa).

Alanine 2 carries the N-acetylalanine modification. Residues lysine 8, lysine 50, lysine 89, and lysine 94 each participate in a glycyl lysine isopeptide (Lys-Gly) (interchain with G-Cter in SUMO2) cross-link. One can recognise an RRM domain in the interval 16–87 (SRVFIGNLNT…QVLDINLAAE (72 aa)). Phosphoserine is present on serine 108. 2 disordered regions span residues 131-177 (PPPP…VKGD) and 204-298 (EKEQ…EDDS). A Nuclear localization signal motif is present at residues 142-148 (PSKRQRV). Phosphoserine is present on residues serine 149 and serine 153. A compositionally biased stretch (low complexity) spans 162-173 (SKSGQRGSSSKS). At lysine 163 the chain carries N6-acetyllysine; alternate. Residue lysine 163 forms a Glycyl lysine isopeptide (Lys-Gly) (interchain with G-Cter in SUMO2); alternate linkage. Residues 176-211 (GDDLQAIKKELTQIKQKVDSLLESLEKIEKEQSKQA) are a coiled coil. Lysine 209 participates in a covalent cross-link: Glycyl lysine isopeptide (Lys-Gly) (interchain with G-Cter in SUMO2). Serine 214, serine 216, and serine 217 each carry phosphoserine. Lysine 222 is covalently cross-linked (Glycyl lysine isopeptide (Lys-Gly) (interchain with G-Cter in SUMO2)). A Glycyl lysine isopeptide (Lys-Gly) (interchain with G-Cter in SUMO2); alternate cross-link involves residue lysine 225. Lysine 225 is covalently cross-linked (Glycyl lysine isopeptide (Lys-Gly) (interchain with G-Cter in SUMO1); alternate). Residues serine 226, serine 231, serine 232, and serine 234 each carry the phosphoserine modification. Positions 235-246 (VKKDETNVKMES) are enriched in basic and acidic residues. Glycyl lysine isopeptide (Lys-Gly) (interchain with G-Cter in SUMO2) cross-links involve residues lysine 236 and lysine 237. Residue lysine 243 forms a Glycyl lysine isopeptide (Lys-Gly) (interchain with G-Cter in SUMO2); alternate linkage. Lysine 243 is covalently cross-linked (Glycyl lysine isopeptide (Lys-Gly) (interchain with G-Cter in SUMO); alternate). A phosphoserine mark is found at serine 246 and serine 253. The span at 248 to 269 (AGADDSAEEGDLLDDDDNEDRG) shows a compositional bias: acidic residues. Residues 270–279 (DDQLELKDDE) show a composition bias toward basic and acidic residues. The span at 280 to 298 (KEPEEGEDDRDSANGEDDS) shows a compositional bias: acidic residues. Phosphoserine is present on residues serine 291 and serine 298.

Belongs to the RRM HNRPC family. RALY subfamily. In terms of assembly, tetramer composed of 3 copies of isoform C1 and 1 copy of isoform C2. Assembly of 3 tetramers with bound pre-mRNA gives rise to a 19S complex that interacts with HNRNPA2B1 tetramers. Component of the 40S hnRNP particle. Identified in the spliceosome C complex. Interacts with IGF2BP1. Interacts with PPIA/CYPA. Post-translationally, phosphorylated on Ser-253 and Ser-291 in resting cells. In terms of processing, sumoylated. Sumoylation reduces affinity for mRNA. Ubiquitinated and degraded after nucleo-cytoplasmic transport by YWHAE.

It localises to the nucleus. Binds pre-mRNA and nucleates the assembly of 40S hnRNP particles. Interacts with poly-U tracts in the 3'-UTR or 5'-UTR of mRNA and modulates the stability and the level of translation of bound mRNA molecules. Single HNRNPC tetramers bind 230-240 nucleotides. Trimers of HNRNPC tetramers bind 700 nucleotides. May play a role in the early steps of spliceosome assembly and pre-mRNA splicing. N6-methyladenosine (m6A) has been shown to alter the local structure in mRNAs and long non-coding RNAs (lncRNAs) via a mechanism named 'm(6)A-switch', facilitating binding of HNRNPC, leading to regulation of mRNA splicing. This Rattus norvegicus (Rat) protein is Heterogeneous nuclear ribonucleoprotein C.